Here is a 126-residue protein sequence, read N- to C-terminus: S-adenosylmethionine decarboxylase proenzyme (126 aa).

Serine 63 functions as the Schiff-base intermediate with substrate; via pyruvic acid in the catalytic mechanism. A Pyruvic acid (Ser); by autocatalysis modification is found at serine 63. Histidine 68 acts as the Proton acceptor; for processing activity in catalysis. Cysteine 83 (proton donor; for catalytic activity) is an active-site residue.

This sequence belongs to the prokaryotic AdoMetDC family. Type 1 subfamily. Heterotetramer of two alpha and two beta chains arranged as a dimer of alpha/beta heterodimers. It depends on pyruvate as a cofactor. In terms of processing, is synthesized initially as an inactive proenzyme. Formation of the active enzyme involves a self-maturation process in which the active site pyruvoyl group is generated from an internal serine residue via an autocatalytic post-translational modification. Two non-identical subunits are generated from the proenzyme in this reaction, and the pyruvate is formed at the N-terminus of the alpha chain, which is derived from the carboxyl end of the proenzyme. The post-translation cleavage follows an unusual pathway, termed non-hydrolytic serinolysis, in which the side chain hydroxyl group of the serine supplies its oxygen atom to form the C-terminus of the beta chain, while the remainder of the serine residue undergoes an oxidative deamination to produce ammonia and the pyruvoyl group blocking the N-terminus of the alpha chain.

It carries out the reaction S-adenosyl-L-methionine + H(+) = S-adenosyl 3-(methylsulfanyl)propylamine + CO2. It participates in amine and polyamine biosynthesis; S-adenosylmethioninamine biosynthesis; S-adenosylmethioninamine from S-adenosyl-L-methionine: step 1/1. Catalyzes the decarboxylation of S-adenosylmethionine to S-adenosylmethioninamine (dcAdoMet), the propylamine donor required for the synthesis of the polyamines spermine and spermidine from the diamine putrescine. The protein is S-adenosylmethionine decarboxylase proenzyme of Syntrophomonas wolfei subsp. wolfei (strain DSM 2245B / Goettingen).